An 893-amino-acid polypeptide reads, in one-letter code: Probable ion channel CASTOR (893 aa).

The disordered stretch occupies residues Met-1–Ala-94. Residues Pro-65–Ala-85 show a composition bias toward pro residues. A helical membrane pass occupies residues Thr-132–Val-152. The stretch at Ser-156 to Ser-178 forms a coiled coil. Transmembrane regions (helical) follow at residues Leu-210–Phe-230, Leu-266–Val-286, and Leu-318–Val-338. RCK N-terminal domains follow at residues Gln-359–Val-500 and Pro-619–Leu-792. Residues Thr-389 to Thr-415 are a coiled coil.

It belongs to the castor/pollux (TC 1.A.1.23) family. As to expression, expressed in roots, leaves, stems and panicles.

The protein localises to the nucleus membrane. In terms of biological role, required for mycorrhizal symbiosis. The protein is Probable ion channel CASTOR of Oryza sativa subsp. japonica (Rice).